We begin with the raw amino-acid sequence, 292 residues long: Phosphatidylglycerol--prolipoprotein diacylglyceryl transferase (292 aa).

The next 3 helical transmembrane spans lie at 18-38 (LFGV…GLLI), 67-87 (LLTW…VLFY), and 105-125 (GGMS…AFCL). Arg150 contributes to the a 1,2-diacyl-sn-glycero-3-phospho-(1'-sn-glycerol) binding site. The next 3 helical transmembrane spans lie at 193–213 (QIYE…LLVW), 222–242 (GSVS…VEFV), and 266–286 (GLTM…YLIL).

This sequence belongs to the Lgt family.

The protein resides in the cell inner membrane. It catalyses the reaction L-cysteinyl-[prolipoprotein] + a 1,2-diacyl-sn-glycero-3-phospho-(1'-sn-glycerol) = an S-1,2-diacyl-sn-glyceryl-L-cysteinyl-[prolipoprotein] + sn-glycerol 1-phosphate + H(+). It participates in protein modification; lipoprotein biosynthesis (diacylglyceryl transfer). In terms of biological role, catalyzes the transfer of the diacylglyceryl group from phosphatidylglycerol to the sulfhydryl group of the N-terminal cysteine of a prolipoprotein, the first step in the formation of mature lipoproteins. This chain is Phosphatidylglycerol--prolipoprotein diacylglyceryl transferase, found in Cereibacter sphaeroides (strain ATCC 17023 / DSM 158 / JCM 6121 / CCUG 31486 / LMG 2827 / NBRC 12203 / NCIMB 8253 / ATH 2.4.1.) (Rhodobacter sphaeroides).